The primary structure comprises 262 residues: Adenosylcobinamide-GDP ribazoletransferase (262 aa).

Transmembrane regions (helical) follow at residues 43-63 (YFGLVGLLIGLLSAIVFWLTQ), 66-86 (LPAGVSVLLAMLVGVLLTGGF), 120-140 (GAIALILALLLKWQLLVELAL), 146-166 (AGSALIVAHTVSRVVAASIIF), 191-211 (LFILVASGVLVLLFLKGLAAL), and 242-262 (AAQQICEIVCYLVLLIVGSIL).

Belongs to the CobS family. Requires Mg(2+) as cofactor.

Its subcellular location is the cell inner membrane. The enzyme catalyses alpha-ribazole + adenosylcob(III)inamide-GDP = adenosylcob(III)alamin + GMP + H(+). It catalyses the reaction alpha-ribazole 5'-phosphate + adenosylcob(III)inamide-GDP = adenosylcob(III)alamin 5'-phosphate + GMP + H(+). Its pathway is cofactor biosynthesis; adenosylcobalamin biosynthesis; adenosylcobalamin from cob(II)yrinate a,c-diamide: step 7/7. In terms of biological role, joins adenosylcobinamide-GDP and alpha-ribazole to generate adenosylcobalamin (Ado-cobalamin). Also synthesizes adenosylcobalamin 5'-phosphate from adenosylcobinamide-GDP and alpha-ribazole 5'-phosphate. The protein is Adenosylcobinamide-GDP ribazoletransferase of Shewanella putrefaciens (strain CN-32 / ATCC BAA-453).